The following is a 1191-amino-acid chain: MAGHEVQYGKHRTRRSFSRIKEVLDLPNLIEIQTDSFQDFLDAGLKEVFEDVLPISNFTDTMDLEFVGYELKEPKYTLEEARIHDASYSAPIFVTFRLVNKETGEIKTQEVFFGDFPIMTEMGTFIINGGERIIVSQLVRSPGVYFNDKVDKNGKVGYGSTVIPNRGAWLELETDAKDIAYTRIDRTRKIPFTTLVRALGFSGDDEIVDIFGDSELVRNTIEKDIHKNPSDSRTDEALKEIYERLRPGEPKTADSSRSLLVARFFDPRRYDLAAVGRYKINKKLNLKTRLLNQTIAENLVDGETGEILVEAGTVMTRDVIDSIAEHIDGDLNKFVYTPNDYAVVTEPVILQKFKVVAPTDPDRVVTIVGNSNPEDKVRALTPADILAEMSYFLNLAEGIGKVDDIDHLGNRRIRAVGELLANQFRIGLARMERNVRERMSVQDNEVLTPQQIINIRPVTAAVKEFFGSSQLSQFMDQHNPLSELSHKRRLSALGPGGLTRDRAGYEVRDVHYTHYGRMCPIETPEGPNIGLINNLSSFGHLNKYGFIQTPYRKVDRSTGAVTNEIVWLTADEEDEFTVAQANSKLNEDGTFAEEIVMGRHQGNNQEFPSSIVDFVDVSPKQVVAVATACIPFLENDDSNRALMGANMQRQAVPLIDPKAPYVGTGMEYQAAHDSGAAVIAKHDGRVIFSDAEKVEVRREDGSLDVYHVQKFRRSNSGTAYNQRTLVKVGDLVEKGDFIADGPSMENGEMALGQNPVVAYMTWEGYNFEDAVIMSERLVKEDVYTSVHLEEFESETRDTKLGPEEITREIPNVGEDSLRDLDEMGIIRIGAEVKEGDILVGKVTPKGEKDLSAEERLLHAIFGDKSREVRDTSLRVPHGGDGVVRDVKIFTRANGDELQSGVNMLVRVYIAQKRKIKVGDKMAGRHGNKGVVSRIVPVEDMPYLPDGTPVDIMLNPLGVPSRMNIGQVMELHLGMAARNLGIHIATPVFDGASSEDLWETVQEAGMDSDAKTVLYDGRTGEPFDNRVSVGVMYMIKLHHMVDDKLHARSVGPYSLVTQQPLGGKAQFGGQRFGEMEVWALEAYGASNVLQEILTYKSDDVTGRLKAYEAITKGKPIPKPGVPESFRVLVKELQSLGLDMRVLDEDDNEVELRDLDEGEDDDVMHVDDLEKARVKQEAEEKQAEQVSEVVQED.

A compositionally biased stretch (basic and acidic residues) spans 1171–1181 (RVKQEAEEKQA). The segment at 1171–1191 (RVKQEAEEKQAEQVSEVVQED) is disordered. Residues 1182 to 1191 (EQVSEVVQED) are compositionally biased toward low complexity.

It belongs to the RNA polymerase beta chain family. In terms of assembly, the RNAP catalytic core consists of 2 alpha, 1 beta, 1 beta' and 1 omega subunit. When a sigma factor is associated with the core the holoenzyme is formed, which can initiate transcription.

It carries out the reaction RNA(n) + a ribonucleoside 5'-triphosphate = RNA(n+1) + diphosphate. DNA-dependent RNA polymerase catalyzes the transcription of DNA into RNA using the four ribonucleoside triphosphates as substrates. This chain is DNA-directed RNA polymerase subunit beta, found in Streptococcus agalactiae serotype Ia (strain ATCC 27591 / A909 / CDC SS700).